The chain runs to 492 residues: Ribose import ATP-binding protein RbsA (492 aa).

2 ABC transporter domains span residues 3 to 239 and 249 to 492; these read IEMK…VGRS and AEIR…TGGK. 35–42 provides a ligand contact to ATP; that stretch reads GENGAGKS.

It belongs to the ABC transporter superfamily. Ribose importer (TC 3.A.1.2.1) family. As to quaternary structure, the complex is composed of an ATP-binding protein (RbsA), two transmembrane proteins (RbsC) and a solute-binding protein (RbsB).

It localises to the cell membrane. The catalysed reaction is D-ribose(out) + ATP + H2O = D-ribose(in) + ADP + phosphate + H(+). Functionally, part of the ABC transporter complex RbsABC involved in ribose import. Responsible for energy coupling to the transport system. The polypeptide is Ribose import ATP-binding protein RbsA (Lactococcus lactis subsp. cremoris (strain SK11)).